The chain runs to 309 residues: Porphobilinogen deaminase (309 aa).

At C242 the chain carries S-(dipyrrolylmethanemethyl)cysteine.

Belongs to the HMBS family. Monomer. It depends on dipyrromethane as a cofactor.

The catalysed reaction is 4 porphobilinogen + H2O = hydroxymethylbilane + 4 NH4(+). Its pathway is porphyrin-containing compound metabolism; protoporphyrin-IX biosynthesis; coproporphyrinogen-III from 5-aminolevulinate: step 2/4. Functionally, tetrapolymerization of the monopyrrole PBG into the hydroxymethylbilane pre-uroporphyrinogen in several discrete steps. This Pseudoalteromonas atlantica (strain T6c / ATCC BAA-1087) protein is Porphobilinogen deaminase.